A 257-amino-acid chain; its full sequence is UPF0246 protein YaaA (257 aa).

It belongs to the UPF0246 family.

The chain is UPF0246 protein YaaA from Salmonella schwarzengrund (strain CVM19633).